Here is a 309-residue protein sequence, read N- to C-terminus: HPr kinase/phosphorylase (309 aa).

Catalysis depends on residues histidine 138 and lysine 159. ATP is bound at residue 153–160 (GDSGIGKS). Serine 160 provides a ligand contact to Mg(2+). The active-site Proton acceptor; for phosphorylation activity. Proton donor; for dephosphorylation activity is aspartate 177. The tract at residues 201–210 (LEIRGVGIID) is important for the catalytic mechanism of both phosphorylation and dephosphorylation. Position 202 (glutamate 202) interacts with Mg(2+). Arginine 243 is an active-site residue. The segment at 264–269 (PVKTGR) is important for the catalytic mechanism of dephosphorylation.

This sequence belongs to the HPrK/P family. As to quaternary structure, homohexamer. Mg(2+) serves as cofactor.

It carries out the reaction [HPr protein]-L-serine + ATP = [HPr protein]-O-phospho-L-serine + ADP + H(+). The enzyme catalyses [HPr protein]-O-phospho-L-serine + phosphate + H(+) = [HPr protein]-L-serine + diphosphate. Catalyzes the ATP- as well as the pyrophosphate-dependent phosphorylation of a specific serine residue in HPr, a phosphocarrier protein of the phosphoenolpyruvate-dependent sugar phosphotransferase system (PTS). HprK/P also catalyzes the pyrophosphate-producing, inorganic phosphate-dependent dephosphorylation (phosphorolysis) of seryl-phosphorylated HPr (P-Ser-HPr). The two antagonistic activities of HprK/P are regulated by several intracellular metabolites, which change their concentration in response to the absence or presence of rapidly metabolisable carbon sources (glucose, fructose, etc.) in the growth medium. Therefore, by controlling the phosphorylation state of HPr, HPrK/P is a sensor enzyme that plays a major role in the regulation of carbon metabolism and sugar transport: it mediates carbon catabolite repression (CCR), and regulates PTS-catalyzed carbohydrate uptake and inducer exclusion. In Streptococcus thermophilus (strain CNRZ 1066), this protein is HPr kinase/phosphorylase.